The chain runs to 276 residues: Sulfur carrier protein FdhD (276 aa).

The Cysteine persulfide intermediate role is filled by cysteine 122. 259-264 (FCRRGR) provides a ligand contact to Mo-bis(molybdopterin guanine dinucleotide).

Belongs to the FdhD family.

The protein localises to the cytoplasm. Functionally, required for formate dehydrogenase (FDH) activity. Acts as a sulfur carrier protein that transfers sulfur from IscS to the molybdenum cofactor prior to its insertion into FDH. This chain is Sulfur carrier protein FdhD, found in Proteus mirabilis (strain HI4320).